Consider the following 156-residue polypeptide: Small ribosomal subunit protein uS7 (156 aa).

This sequence belongs to the universal ribosomal protein uS7 family. Part of the 30S ribosomal subunit. Contacts proteins S9 and S11.

In terms of biological role, one of the primary rRNA binding proteins, it binds directly to 16S rRNA where it nucleates assembly of the head domain of the 30S subunit. Is located at the subunit interface close to the decoding center, probably blocks exit of the E-site tRNA. The sequence is that of Small ribosomal subunit protein uS7 from Prochlorococcus marinus subsp. pastoris (strain CCMP1986 / NIES-2087 / MED4).